The sequence spans 258 residues: C4b-binding protein beta chain (258 aa).

The first 15 residues, 1–15 (MLCLVVCCLIWLISA), serve as a signal peptide directing secretion. The Sushi 1; atypical; lacks a Cys domain occupies 18-75 (GSCSEPPPVNNSVFVGKETEEQILGIYLCIKGYHLVGKKSLVFDPSKEWNSTLPECLL). 5 N-linked (GlcNAc...) asparagine glycosylation sites follow: Asn-27, Asn-67, Asn-89, Asn-95, and Asn-114. Disulfide bonds link Cys-46-Cys-73, Cys-78-Cys-118, Cys-104-Cys-131, Cys-136-Cys-176, and Cys-162-Cys-188. Sushi domains are found at residues 76-133 (GHCP…ICRS) and 134-190 (RDCE…TCES). N-linked (GlcNAc...) asparagine glycosylation is present at Asn-218.

In terms of assembly, disulfide-linked complex of alpha and beta chains.

It is found in the secreted. Controls the classical pathway of complement activation. It binds as a cofactor to C3b/C4b inactivator (C3bINA), which then hydrolyzes the complement fragment C4b. It also accelerates the degradation of the C4bC2a complex (C3 convertase) by dissociating the complement fragment C2a. It also interacts with anticoagulant protein S and with serum amyloid P component. This is C4b-binding protein beta chain (C4bpb) from Rattus norvegicus (Rat).